We begin with the raw amino-acid sequence, 76 residues long: Translation initiation factor IF-1 (76 aa).

Residues 1 to 76 (MEDMAKKDGV…TRGRIVYRYK (76 aa)) enclose the S1-like domain.

This sequence belongs to the IF-1 family. Component of the 30S ribosomal translation pre-initiation complex which assembles on the 30S ribosome in the order IF-2 and IF-3, IF-1 and N-formylmethionyl-tRNA(fMet); mRNA recruitment can occur at any time during PIC assembly.

The protein resides in the cytoplasm. One of the essential components for the initiation of protein synthesis. Stabilizes the binding of IF-2 and IF-3 on the 30S subunit to which N-formylmethionyl-tRNA(fMet) subsequently binds. Helps modulate mRNA selection, yielding the 30S pre-initiation complex (PIC). Upon addition of the 50S ribosomal subunit IF-1, IF-2 and IF-3 are released leaving the mature 70S translation initiation complex. The protein is Translation initiation factor IF-1 of Renibacterium salmoninarum (strain ATCC 33209 / DSM 20767 / JCM 11484 / NBRC 15589 / NCIMB 2235).